The primary structure comprises 202 residues: FMN-dependent NADH:quinone oxidoreductase (202 aa).

FMN contacts are provided by residues Ser10 and 95–98 (MYNF).

It belongs to the azoreductase type 1 family. As to quaternary structure, homodimer. FMN serves as cofactor.

It carries out the reaction 2 a quinone + NADH + H(+) = 2 a 1,4-benzosemiquinone + NAD(+). The enzyme catalyses N,N-dimethyl-1,4-phenylenediamine + anthranilate + 2 NAD(+) = 2-(4-dimethylaminophenyl)diazenylbenzoate + 2 NADH + 2 H(+). In terms of biological role, quinone reductase that provides resistance to thiol-specific stress caused by electrophilic quinones. Functionally, also exhibits azoreductase activity. Catalyzes the reductive cleavage of the azo bond in aromatic azo compounds to the corresponding amines. The sequence is that of FMN-dependent NADH:quinone oxidoreductase from Pseudoalteromonas atlantica (strain T6c / ATCC BAA-1087).